The sequence spans 509 residues: Dihydrolipoyl dehydrogenase, mitochondrial (509 aa).

The transit peptide at 1–35 (MQSWSRVYCSLAKRGHFNRISHGLQGLSAVPLRTY) directs the protein to the mitochondrion. Residue K66 is modified to N6-acetyllysine; alternate. K66 carries the post-translational modification N6-succinyllysine; alternate. FAD-binding positions include 71-80 (EKNETLGGTC) and K89. Residues C80 and C85 are joined by a disulfide bond. Residues K104, K122, K132, and K143 each carry the N6-acetyllysine; alternate modification. An N6-succinyllysine; alternate mark is found at K104, K122, K132, and K143. G154 provides a ligand contact to FAD. K159 and K166 each carry N6-succinyllysine. 183–185 (TGS) is a binding site for FAD. NAD(+) is bound by residues 220–227 (GAGVIGVE) and E243. 2 positions are modified to N6-succinyllysine: K273 and K277. Residue V278 coordinates NAD(+). Phosphoserine is present on residues S285 and S297. An NAD(+)-binding site is contributed by G314. Position 346 is an N6-acetyllysine (K346). Residues D355 and 361–364 (MLAH) each bind FAD. K410 carries the N6-acetyllysine; alternate modification. K410 carries the N6-succinyllysine; alternate modification. N6-acetyllysine occurs at positions 417 and 420. Position 430 is an N6-succinyllysine (K430). The active-site Proton acceptor is H487. At S502 the chain carries Phosphoserine. The residue at position 505 (K505) is an N6-acetyllysine; alternate. K505 is modified (N6-succinyllysine; alternate).

The protein belongs to the class-I pyridine nucleotide-disulfide oxidoreductase family. As to quaternary structure, homodimer. Part of the multimeric pyruvate dehydrogenase complex that contains multiple copies of pyruvate dehydrogenase (subunits PDHA (PDHA1 or PDHA2) and PDHB, E1), dihydrolipoamide acetyltransferase (DLAT, E2) and lipoamide dehydrogenase (DLD, E3). These subunits are bound to an inner core composed of about 48 DLAT and 12 PDHX molecules (by non covalent bonds). The 2-oxoglutarate dehydrogenase complex is composed of OGDH (2-oxoglutarate dehydrogenase; E1), DLST (dihydrolipoamide succinyltransferase; E2), DLD (dihydrolipoamide dehydrogenase; E3) and the assembly factor KGD4. It contains multiple copies of the three enzymatic components (E1, E2 and E3). In the nucleus, the 2-oxoglutarate dehydrogenase complex associates with KAT2A. Interacts with PDHX. FAD serves as cofactor. In terms of processing, tyrosine phosphorylated.

It localises to the mitochondrion matrix. Its subcellular location is the nucleus. It is found in the cell projection. The protein localises to the cilium. The protein resides in the flagellum. It localises to the cytoplasmic vesicle. Its subcellular location is the secretory vesicle. It is found in the acrosome. The enzyme catalyses N(6)-[(R)-dihydrolipoyl]-L-lysyl-[protein] + NAD(+) = N(6)-[(R)-lipoyl]-L-lysyl-[protein] + NADH + H(+). Disruption of native heterodimer state inhibits primary dihydrolipoamide dehydrogenase activity and induces serine protease activity. In terms of biological role, lipoamide dehydrogenase is a component of the glycine cleavage system as well as an E3 component of three alpha-ketoacid dehydrogenase complexes (pyruvate-, alpha-ketoglutarate-, and branched-chain amino acid-dehydrogenase complex). The 2-oxoglutarate dehydrogenase complex is mainly active in the mitochondrion. A fraction of the 2-oxoglutarate dehydrogenase complex also localizes in the nucleus and is required for lysine succinylation of histones: associates with KAT2A on chromatin and provides succinyl-CoA to histone succinyltransferase KAT2A. In monomeric form may have additional moonlighting function as serine protease. Involved in the hyperactivation of spermatazoa during capacitation and in the spermatazoal acrosome reaction. The sequence is that of Dihydrolipoyl dehydrogenase, mitochondrial (DLD) from Homo sapiens (Human).